The chain runs to 312 residues: Very-long-chain 3-oxoacyl-CoA reductase (312 aa).

A helical membrane pass occupies residues 4-24; that stretch reads APPAAGFLYWVGASTIAYLAL. 50–79 serves as a coordination point for NADP(+); the sequence is GEWAVVTGGTDGIGKAYAEELAKRGMKIVL. Helical transmembrane passes span 182-202 and 269-285; these read GVILNISSASGMLPVPLLTIY and TTGYVIHSLMGSINSIM. Serine 189 contacts substrate. Tyrosine 202 serves as the catalytic Proton acceptor. The short motif at 308–312 is the Di-lysine motif element; that stretch reads KRKKN.

The protein belongs to the short-chain dehydrogenases/reductases (SDR) family. 17-beta-HSD 3 subfamily. As to expression, expressed in most tissues tested.

The protein localises to the endoplasmic reticulum membrane. It carries out the reaction a very-long-chain (3R)-3-hydroxyacyl-CoA + NADP(+) = a very-long-chain 3-oxoacyl-CoA + NADPH + H(+). The enzyme catalyses 17beta-estradiol + NAD(+) = estrone + NADH + H(+). The catalysed reaction is 17beta-estradiol + NADP(+) = estrone + NADPH + H(+). It catalyses the reaction 3-oxooctadecanoyl-CoA + NADPH + H(+) = (3R)-hydroxyoctadecanoyl-CoA + NADP(+). It carries out the reaction (7Z,10Z,13Z,16Z)-3-oxodocosatetraenoyl-CoA + NADPH + H(+) = (3R)-hydroxy-(7Z,10Z,13Z,16Z)-docosatetraenoyl-CoA + NADP(+). The enzyme catalyses 3-oxo-(7Z,10Z,13Z,16Z,19Z)-docosapentaenoyl-CoA + NADPH + H(+) = (3R)-hydroxy-(7Z,10Z,13Z,16Z,19Z)-docosapentaenoyl-CoA + NADP(+). The catalysed reaction is (8Z,11Z,14Z)-3-oxoeicosatrienoyl-CoA + NADPH + H(+) = (3R)-hydroxy-(8Z,11Z,14Z)-eicosatrienoyl-CoA + NADP(+). Its pathway is lipid metabolism; fatty acid biosynthesis. It participates in steroid biosynthesis; estrogen biosynthesis. Catalyzes the second of the four reactions of the long-chain fatty acids elongation cycle. This endoplasmic reticulum-bound enzymatic process, allows the addition of two carbons to the chain of long- and very long-chain fatty acids/VLCFAs per cycle. This enzyme has a 3-ketoacyl-CoA reductase activity, reducing 3-ketoacyl-CoA to 3-hydroxyacyl-CoA, within each cycle of fatty acid elongation. Thereby, it may participate in the production of VLCFAs of different chain lengths that are involved in multiple biological processes as precursors of membrane lipids and lipid mediators. May also catalyze the transformation of estrone (E1) into estradiol (E2) and play a role in estrogen formation. The sequence is that of Very-long-chain 3-oxoacyl-CoA reductase from Mus musculus (Mouse).